Here is a 502-residue protein sequence, read N- to C-terminus: Glycerol kinase (502 aa).

Threonine 14 serves as a coordination point for ADP. Positions 14, 15, and 16 each coordinate ATP. Threonine 14 is a binding site for sn-glycerol 3-phosphate. Residue arginine 18 coordinates ADP. 4 residues coordinate sn-glycerol 3-phosphate: arginine 84, glutamate 85, tyrosine 136, and aspartate 246. Residues arginine 84, glutamate 85, tyrosine 136, aspartate 246, and glutamine 247 each coordinate glycerol. Positions 268 and 311 each coordinate ADP. Threonine 268, glycine 311, glutamine 315, and glycine 412 together coordinate ATP. Residues glycine 412 and asparagine 416 each coordinate ADP.

The protein belongs to the FGGY kinase family. As to quaternary structure, homotetramer and homodimer (in equilibrium). Heterodimer with EIIA-Glc. Binds 1 zinc ion per glycerol kinase EIIA-Glc dimer. The zinc ion is important for dimerization.

The enzyme catalyses glycerol + ATP = sn-glycerol 3-phosphate + ADP + H(+). It functions in the pathway polyol metabolism; glycerol degradation via glycerol kinase pathway; sn-glycerol 3-phosphate from glycerol: step 1/1. Its activity is regulated as follows. Activity of this regulatory enzyme is affected by several metabolites. Allosterically and non-competitively inhibited by fructose 1,6-bisphosphate (FBP) and unphosphorylated phosphocarrier protein EIIA-Glc (III-Glc), an integral component of the bacterial phosphotransferase (PTS) system. Its function is as follows. Key enzyme in the regulation of glycerol uptake and metabolism. Catalyzes the phosphorylation of glycerol to yield sn-glycerol 3-phosphate. The protein is Glycerol kinase of Salmonella agona (strain SL483).